A 102-amino-acid chain; its full sequence is Small ribosomal subunit protein uS10 (102 aa).

It belongs to the universal ribosomal protein uS10 family. Part of the 30S ribosomal subunit.

Its function is as follows. Involved in the binding of tRNA to the ribosomes. This chain is Small ribosomal subunit protein uS10, found in Gluconacetobacter diazotrophicus (strain ATCC 49037 / DSM 5601 / CCUG 37298 / CIP 103539 / LMG 7603 / PAl5).